The primary structure comprises 892 residues: Protein translocase subunit SecA (892 aa).

Residues glutamine 89, 107-111, and aspartate 517 each bind ATP; that span reads GEGKT. The Zn(2+) site is built by cysteine 879, cysteine 881, cysteine 890, and histidine 891.

The protein belongs to the SecA family. In terms of assembly, monomer and homodimer. Part of the essential Sec protein translocation apparatus which comprises SecA, SecYEG and auxiliary proteins SecDF-YajC and YidC. The cofactor is Zn(2+).

The protein localises to the cell inner membrane. Its subcellular location is the cytoplasm. It catalyses the reaction ATP + H2O + cellular proteinSide 1 = ADP + phosphate + cellular proteinSide 2.. Functionally, part of the Sec protein translocase complex. Interacts with the SecYEG preprotein conducting channel. Has a central role in coupling the hydrolysis of ATP to the transfer of proteins into and across the cell membrane, serving as an ATP-driven molecular motor driving the stepwise translocation of polypeptide chains across the membrane. This chain is Protein translocase subunit SecA, found in Ruthia magnifica subsp. Calyptogena magnifica.